The following is a 155-amino-acid chain: Aspartate carbamoyltransferase regulatory chain (155 aa).

Zn(2+)-binding residues include cysteine 113, cysteine 118, cysteine 139, and cysteine 142.

This sequence belongs to the PyrI family. In terms of assembly, contains catalytic and regulatory chains. The cofactor is Zn(2+).

Its function is as follows. Involved in allosteric regulation of aspartate carbamoyltransferase. The sequence is that of Aspartate carbamoyltransferase regulatory chain from Methanosphaerula palustris (strain ATCC BAA-1556 / DSM 19958 / E1-9c).